A 408-amino-acid polypeptide reads, in one-letter code: Interferon-activable protein 203 (408 aa).

Residues 1 to 87 (MAEYKNIVLL…AKKLKTEKAK (87 aa)) enclose the Pyrin domain. Residues 84-208 (EKAKVQEKKK…EGHHQGPKQV (125 aa)) are disordered. Basic residues predominate over residues 92 to 102 (KKGKCKTAGKK). A compositionally biased stretch (polar residues) spans 150–159 (AQLPETSGTN). The HIN-200 domain occupies 190–388 (TVPKEPSREE…SVRHSYMQVI (199 aa)).

This sequence belongs to the HIN-200 family. Constitutively expressed in the thymus, bone marrow and spleen. Isoform 1 and isoform 3 are present in liver (at protein level).

The protein resides in the nucleus. This is Interferon-activable protein 203 (Ifi203) from Mus musculus (Mouse).